Consider the following 288-residue polypeptide: 2-hydroxy-6-oxononadienedioate/2-hydroxy-6-oxononatrienedioate hydrolase (288 aa).

Catalysis depends on H267, which acts as the Proton acceptor.

The protein belongs to the AB hydrolase superfamily. MhpC family. Homodimer.

The enzyme catalyses (2Z,4E)-2-hydroxy-6-oxonona-2,4-dienedioate + H2O = (2Z)-2-hydroxypenta-2,4-dienoate + succinate + H(+). It catalyses the reaction (2Z,4E,7E)-2-hydroxy-6-oxonona-2,4,7-trienedioate + H2O = (2Z)-2-hydroxypenta-2,4-dienoate + fumarate + H(+). Its pathway is aromatic compound metabolism; 3-phenylpropanoate degradation. Its function is as follows. Catalyzes the cleavage of the C5-C6 bond of 2-hydroxy-6-oxononadienedioate and 2-hydroxy-6-oxononatrienedioate, a dienol ring fission product of the bacterial meta-cleavage pathway for degradation of phenylpropionic acid. The protein is 2-hydroxy-6-oxononadienedioate/2-hydroxy-6-oxononatrienedioate hydrolase of Escherichia coli (strain K12 / DH10B).